Consider the following 500-residue polypeptide: L-arabinose isomerase (500 aa).

Residues E306, E333, H350, and H450 each coordinate Mn(2+).

The protein belongs to the arabinose isomerase family. Homohexamer. Requires Mn(2+) as cofactor.

The catalysed reaction is beta-L-arabinopyranose = L-ribulose. It functions in the pathway carbohydrate degradation; L-arabinose degradation via L-ribulose; D-xylulose 5-phosphate from L-arabinose (bacterial route): step 1/3. Its function is as follows. Catalyzes the conversion of L-arabinose to L-ribulose. The sequence is that of L-arabinose isomerase from Escherichia coli O157:H7.